Reading from the N-terminus, the 187-residue chain is MDFYSLIFLSCALGMDAFAVSLCKSFSVKKLHLKHYLIVGIYFGGFQALMPTIGYFIGITFASFIASIDHWIAFILLSLIGLKMIKESLENENCNSNAKQFGFKTMLALAIATSIDALAVGVSFAFLNVNLLLAIFLIGIITFILCIIALKIGNKFGIYLKNKAELLGGLVLIILGVKILIEHLFFD.

6 consecutive transmembrane segments (helical) span residues 3 to 23 (FYSL…VSLC), 35 to 55 (HYLI…TIGY), 56 to 76 (FIGI…AFIL), 107 to 127 (LALA…FAFL), 129 to 149 (VNLL…CIIA), and 166 to 186 (LLGG…HLFF).

Belongs to the MntP (TC 9.B.29) family.

Its subcellular location is the cell inner membrane. In terms of biological role, probably functions as a manganese efflux pump. The polypeptide is Putative manganese efflux pump MntP (Campylobacter jejuni subsp. doylei (strain ATCC BAA-1458 / RM4099 / 269.97)).